The chain runs to 195 residues: Imidazoleglycerol-phosphate dehydratase (195 aa).

The protein belongs to the imidazoleglycerol-phosphate dehydratase family.

It localises to the cytoplasm. It catalyses the reaction D-erythro-1-(imidazol-4-yl)glycerol 3-phosphate = 3-(imidazol-4-yl)-2-oxopropyl phosphate + H2O. It participates in amino-acid biosynthesis; L-histidine biosynthesis; L-histidine from 5-phospho-alpha-D-ribose 1-diphosphate: step 6/9. The chain is Imidazoleglycerol-phosphate dehydratase from Nitrosomonas eutropha (strain DSM 101675 / C91 / Nm57).